Here is a 388-residue protein sequence, read N- to C-terminus: Protochlorophyllide reductase A, chloroplastic (388 aa).

A chloroplast-targeting transit peptide spans 1-74; it reads MALQLLPSTL…KPSGKKTLRQ (74 aa).

It belongs to the short-chain dehydrogenases/reductases (SDR) family. POR subfamily.

Its subcellular location is the plastid. The protein localises to the chloroplast. It carries out the reaction chlorophyllide a + NADP(+) = protochlorophyllide a + NADPH + H(+). Its pathway is porphyrin-containing compound metabolism; chlorophyll biosynthesis. Functionally, phototransformation of protochlorophyllide (Pchlide) to chlorophyllide (Chlide). In Triticum aestivum (Wheat), this protein is Protochlorophyllide reductase A, chloroplastic (PORA).